An 84-amino-acid polypeptide reads, in one-letter code: uncharacterized protein (84 aa).

Residues 1–14 are compositionally biased toward low complexity; sequence MQKLNKSSSKGKNN. Positions 1–84 are disordered; the sequence is MQKLNKSSSK…VDKGERKESE (84 aa). Residues 28 to 40 show a composition bias toward gly residues; it reads STYGFGPYGGGGF. 2 stretches are compositionally biased toward basic and acidic residues: residues 53–65 and 73–84; these read DTKKLKGEVEEGT and KLVDKGERKESE.

This is an uncharacterized protein from Schizosaccharomyces pombe (strain 972 / ATCC 24843) (Fission yeast).